The primary structure comprises 37 residues: Esculentin-2B (37 aa).

Cysteine 31 and cysteine 37 are oxidised to a cystine.

This sequence belongs to the frog skin active peptide (FSAP) family. Esculentin subfamily. Expressed by the skin glands.

It is found in the secreted. Its function is as follows. Shows antibacterial activity against representative Gram-negative and Gram-positive bacterial species, and hemolytic activity. The chain is Esculentin-2B from Pelophylax lessonae (Pool frog).